A 357-amino-acid chain; its full sequence is MGSLDVEKSAIGWAARDPSGLLSPYTYTLRNTGPEDVQVKVLYCGLCHSDLHQVKNDLGMSNYPLVPGHEVVGKVVEVGADVSKFKVGDTVGVGLLVGSCRNCGPCKREIEQYCNKKIWNCNDVYTDGKPTQGGFANSMVVDQNFVVKIPEGMAPEQAAPLLCAGITVYSPFNHFGFNQSGFRGGILGLGGVGHMGVKIAKAMGHHVTVISSSNKKRQEALEHLGADDYLVSSDTDKMQEAADSLDYIIDTVPVGHPLELYLSLLKIDGKLILIGVINTPLQFISPMVMLGRKSITGSFIGSMKETEEMLDFCKEKGVTSQIEIVKMDYINTAMERLEKNDVSYRFVVDVAGSKLDQ.

Cys-47 contacts Zn(2+). Ser-49 serves as a coordination point for NADP(+). 7 residues coordinate Zn(2+): His-69, Glu-70, Cys-100, Cys-103, Cys-106, Cys-114, and Cys-163. Residues Thr-167, Gly-188–Gly-193, Ser-211–Lys-216, Thr-251, Gly-275, and Ser-298–Ile-300 contribute to the NADP(+) site.

It belongs to the zinc-containing alcohol dehydrogenase family. Homodimer. Zn(2+) serves as cofactor. In terms of processing, the N-terminus is blocked.

The catalysed reaction is (E)-cinnamyl alcohol + NADP(+) = (E)-cinnamaldehyde + NADPH + H(+). The enzyme catalyses (E)-coniferol + NADP(+) = (E)-coniferaldehyde + NADPH + H(+). It carries out the reaction (E)-sinapyl alcohol + NADP(+) = (E)-sinapaldehyde + NADPH + H(+). It catalyses the reaction (E)-4-coumaroyl alcohol + NADP(+) = (E)-4-coumaraldehyde + NADPH + H(+). The catalysed reaction is (E)-caffeyl alcohol + NADP(+) = (E)-caffeyl aldehyde + NADPH + H(+). It participates in aromatic compound metabolism; phenylpropanoid biosynthesis. Its function is as follows. Involved in lignin biosynthesis. Catalyzes the final step specific for the production of lignin monomers. Catalyzes the NADPH-dependent reduction of coniferaldehyde, 5-hydroxyconiferaldehyde, sinapaldehyde, 4-coumaraldehyde and caffeyl aldehyde to their respective alcohols. The chain is Probable cinnamyl alcohol dehydrogenase 2 (CAD19) from Nicotiana tabacum (Common tobacco).